Reading from the N-terminus, the 275-residue chain is N-acetyltransferase YodP (275 aa).

One can recognise an N-acetyltransferase domain in the interval 125 to 271 (FTMRKAETND…AEGLENMNIW (147 aa)).

The protein belongs to the acetyltransferase family.

It carries out the reaction (3S)-3,6-diaminohexanoate + acetyl-CoA = (3S)-6-acetamido-3-aminohexanoate + CoA + H(+). Its function is as follows. In vitro, is able to catalyze the acetylation of beta-lysine to N6-acetyl-beta-lysine, an archaeal osmolyte produced by methanogenic archaea. Its physiological function has not yet been elucidated. This is N-acetyltransferase YodP (yodP) from Bacillus subtilis (strain 168).